A 681-amino-acid chain; its full sequence is Transmembrane protein 168-A (681 aa).

The next 9 helical transmembrane spans lie at 16-36, 47-67, 73-93, 135-155, 156-176, 184-204, 252-272, 281-301, and 346-365; these read FLRC…CLGM, MILV…ILYY, SASL…LCFL, PVVI…ASIS, LVFD…ALII, LALP…FQSL, FSLF…AFKL, VIPG…VFLV, and LVLF…WQVA. Residue Asn517 is glycosylated (N-linked (GlcNAc...) asparagine).

The protein belongs to the TMEM168 family.

The protein localises to the nucleus membrane. Its function is as follows. Plays a key role in maintaining the cardiac electrical stability by modulating cell surface expression of SCN5A. In Danio rerio (Zebrafish), this protein is Transmembrane protein 168-A (tmem168a).